Consider the following 302-residue polypeptide: Bacteriochlorophyll synthase 33 kDa chain (302 aa).

9 helical membrane-spanning segments follow: residues 25–45 (ITWFPPIWAYLCGTVSVGIWP), 49–69 (WPLVLLGMVLAGPLVCGMSQA), 97–117 (WGLYIALLMTVLSLAVGWMLG), 119–139 (WGFGATVFGVLAAWAYSVEPI), 145–165 (GWWGPGLVALCYEGLPWFTGA), 166–186 (AVLSAGAPSFFIVTVALLYAF), 223–243 (LACTVMAMAQILVITLLVIWG), 246–266 (IHAGIITALLVAQLFAMRVLL), and 275–295 (WYNGTGVTLYVLGMMVAAFAI).

The protein resides in the cell membrane. It functions in the pathway porphyrin-containing compound metabolism; bacteriochlorophyll biosynthesis (light-independent). Catalyzes the esterification of bacteriochlorophyllide a by geranylgeraniol-PPi. In Cereibacter sphaeroides (strain ATCC 17023 / DSM 158 / JCM 6121 / CCUG 31486 / LMG 2827 / NBRC 12203 / NCIMB 8253 / ATH 2.4.1.) (Rhodobacter sphaeroides), this protein is Bacteriochlorophyll synthase 33 kDa chain (bchG).